The chain runs to 253 residues: DNA repair protein RecO (253 aa).

The protein belongs to the RecO family.

Functionally, involved in DNA repair and RecF pathway recombination. This is DNA repair protein RecO from Dehalococcoides mccartyi (strain ATCC BAA-2100 / JCM 16839 / KCTC 5957 / BAV1).